The following is a 229-amino-acid chain: Putative germin-like protein 12-3 (229 aa).

An N-terminal signal peptide occupies residues M1–A22. A disulfide bridge links C32 with C47. The region spanning A62 to D217 is the Cupin type-1 domain. N78 carries an N-linked (GlcNAc...) asparagine glycan. H111, H113, E118, and H162 together coordinate Mn(2+).

Belongs to the germin family. As to quaternary structure, oligomer (believed to be a pentamer but probably hexamer).

It is found in the secreted. Its subcellular location is the extracellular space. The protein localises to the apoplast. In terms of biological role, may play a role in plant defense. Probably has no oxalate oxidase activity even if the active site is conserved. This is Putative germin-like protein 12-3 from Oryza sativa subsp. japonica (Rice).